We begin with the raw amino-acid sequence, 492 residues long: Alpha-2-antiplasmin (492 aa).

Positions 1-22 (MALLWGLLALILSCLSSLCSAQ) are cleaved as a signal peptide. Positions 23 to 40 (FSPVSTMEPLDLQLMDGQ) are excised as a propeptide. The interval 56-76 (QEPGGQIAPKKAPEDCKLSPT) is disordered. Cys-71 and Cys-144 form a disulfide bridge. 5 N-linked (GlcNAc...) asparagine glycosylation sites follow: Asn-127, Asn-249, Asn-296, Asn-310, and Asn-317. The disordered stretch occupies residues 433-492 (SVRNPNPGAQPERKEQQDSPDGKDSFQDHKGLPRGDKPFDPDLKLGPPSEEDYAQPSSPK). A compositionally biased stretch (basic and acidic residues) spans 443 to 475 (PERKEQQDSPDGKDSFQDHKGLPRGDKPFDPDL). Tyr-485 carries the sulfotyrosine modification.

This sequence belongs to the serpin family. Forms protease inhibiting heterodimer with TMPRSS7. In terms of processing, proteolytically cleaved at Pro-31 by both the prolyl endopeptidase FAP form and antiplasmin-cleaving enzyme FAP soluble form to generate mature alpha-2-antiplasmin. Expressed by the liver and secreted in plasma.

It localises to the secreted. Its function is as follows. Serine protease inhibitor. The major targets of this inhibitor are plasmin and trypsin, but it also inactivates matriptase-3/TMPRSS7 and chymotrypsin. The chain is Alpha-2-antiplasmin (SERPINF2) from Bos taurus (Bovine).